Consider the following 378-residue polypeptide: Putative glutamate--cysteine ligase 2 (378 aa).

This sequence belongs to the glutamate--cysteine ligase type 2 family. YbdK subfamily.

The catalysed reaction is L-cysteine + L-glutamate + ATP = gamma-L-glutamyl-L-cysteine + ADP + phosphate + H(+). ATP-dependent carboxylate-amine ligase which exhibits weak glutamate--cysteine ligase activity. In Salinispora tropica (strain ATCC BAA-916 / DSM 44818 / JCM 13857 / NBRC 105044 / CNB-440), this protein is Putative glutamate--cysteine ligase 2.